A 433-amino-acid chain; its full sequence is MDTDFPVSLSPAFLKVTRVRGQACPRVCAPNLPRSVTPSTSGRWATRAARSALHVVPAAGTAPAPPPPRALRPAPGPPRSAPLAPPLRRVVQSLGSSRGSRASCCSPSCLHGDSASQARGSEPSSSAERGWPSWSGLRGNSLAGRPEGWASGTPRLSKHPQRSLVPEFCIPEIPSNYLDKTEVVKAPKSRQNGRLLLCDPKEKLMSGSNKEKPQKSSFGRRPRLSSKLCTSPTQIPGGATVFSARKETSSKKIEDKVSLKSSENRPSSRSIETNRQFDLWSSSFLKESSGEVNKDLVLAKQEKNSEYCLEDIEENLSDSTDGDGEEDSNNEDDEGPAKKETRAPLELMAEFLRAEMGRDYQLAKKLCQMILIYEPENPVAKEFFSLIEEILLKEKAQEEEEEEESDEDSSSESEVDSSEDGSEDSSDECEDGS.

Disordered regions lie at residues 56 to 86, 113 to 161, 189 to 273, 308 to 344, and 394 to 433; these read VPAAGTAPAPPPPRALRPAPGPPRSAPLAPP, DSAS…KHPQ, SRQN…SIET, CLEDIEENLSDSTDGDGEEDSNNEDDEGPAKKETRAP, and EKAQEEEEEEESDEDSSSESEVDSSEDGSEDSSDECEDGS. The segment covering 63-85 has biased composition (pro residues); sequence PAPPPPRALRPAPGPPRSAPLAP. Residues 114 to 127 are compositionally biased toward polar residues; it reads SASQARGSEPSSSA. 2 stretches are compositionally biased toward basic and acidic residues: residues 199-214 and 244-258; these read DPKEKLMSGSNKEKPQ and ARKETSSKKIEDKVS. Polar residues predominate over residues 259 to 273; sequence LKSSENRPSSRSIET. 2 stretches are compositionally biased toward acidic residues: residues 308–334 and 397–433; these read CLEDIEENLSDSTDGDGEEDSNNEDDE and QEEEEEEESDEDSSSESEVDSSEDGSEDSSDECEDGS.

This chain is Glutamate-rich protein 2 (Erich2), found in Rattus norvegicus (Rat).